We begin with the raw amino-acid sequence, 219 residues long: Glutamine transport system permease protein GlnP (219 aa).

Topologically, residues 1–22 (MQFDWSAIWPAIPLLIEGAKMT) are periplasmic. The ABC transmembrane type-1 domain occupies 19-209 (AKMTLWISVL…IITLVLSFIL (191 aa)). Residues 23–43 (LWISVLGLAGGLVIGLLAGFA) traverse the membrane as a helical segment. At 44–53 (RTFGGWIANH) the chain is on the cytoplasmic side. The chain crosses the membrane as a helical span at residues 54–74 (VALVFIEVIRGTPIVVQVMFI). Over 75–88 (YFALPMAFNDLRID) the chain is Periplasmic. The chain crosses the membrane as a helical span at residues 89–109 (PFTAAVVTIMINSGAYIAEIT). Residues 110-150 (RGAVLSIHKGFREAGLALGLSRWETIRYVILPLALRRMLPP) are Cytoplasmic-facing. The helical transmembrane segment at 151-171 (LGNQWIISIKDTSLFIVIGVA) threads the bilayer. Over 172–187 (ELTRQGQEIIAGNFRA) the chain is Periplasmic. A helical transmembrane segment spans residues 188–208 (LEIWSAVAVFYLIITLVLSFI). The Cytoplasmic segment spans residues 209 to 219 (LRRLERRMKIL).

The protein belongs to the binding-protein-dependent transport system permease family. HisMQ subfamily.

Its subcellular location is the cell inner membrane. Functionally, part of the binding-protein-dependent transport system for glutamine; probably responsible for the translocation of the substrate across the membrane. The polypeptide is Glutamine transport system permease protein GlnP (glnP) (Escherichia coli O6:H1 (strain CFT073 / ATCC 700928 / UPEC)).